We begin with the raw amino-acid sequence, 365 residues long: Outer membrane protein assembly factor BamC (365 aa).

The N-terminal stretch at methionine 1 to alanine 16 is a signal peptide. A lipid anchor (N-palmitoyl cysteine) is attached at cysteine 17. Cysteine 17 is lipidated: S-diacylglycerol cysteine.

The protein belongs to the BamC family. As to quaternary structure, part of the Bam complex.

It localises to the cell outer membrane. Its function is as follows. Part of the outer membrane protein assembly complex, which is involved in assembly and insertion of beta-barrel proteins into the outer membrane. The sequence is that of Outer membrane protein assembly factor BamC from Shewanella oneidensis (strain ATCC 700550 / JCM 31522 / CIP 106686 / LMG 19005 / NCIMB 14063 / MR-1).